We begin with the raw amino-acid sequence, 353 residues long: MGCGMSTEEKEGKARNEEIENQLKRDRLQQRNEIKMLLLGAGESGKSTILKQMKLIHEGGYSRDERESFKEIIFSNTVQSMRVILEAMESLELPLEDQRMEYHVQTIFMQPAQIEGDVLPPEVGNAIEALWKDRGVQECFKRSREYQLNDSARYYFDNIARIAAPDYMPNDQDVLRSRVKTTGITETTFIIGDLTYRMFDVGGQRSERKKWIHCFENVTTILFLVAISEYDQLLFEDETVNRMQEALTLFDSICNSRWFIKTSIILFLNKIDRFKEKLPISPMKNYFPDYEGGDDYAAACDYILNRFVSLNQHETKQIYTHFTCATDTTQIRFVMAAVNDIIIQENLRLCGLI.

The tract at residues 1–21 (MGCGMSTEEKEGKARNEEIEN) is disordered. Glycine 2 is lipidated: N-myristoyl glycine. Residue cysteine 3 is the site of S-palmitoyl cysteine attachment. The span at 7–21 (TEEKEGKARNEEIEN) shows a compositional bias: basic and acidic residues. One can recognise a G-alpha domain in the interval 32–353 (NEIKMLLLGA…QENLRLCGLI (322 aa)). The segment at 35 to 48 (KMLLLGAGESGKST) is G1 motif. The GTP site is built by glutamate 43, serine 44, glycine 45, lysine 46, serine 47, threonine 48, aspartate 150, leucine 175, threonine 181, glycine 203, asparagine 269, lysine 270, aspartate 272, and alanine 325. Serine 47 is a Mg(2+) binding site. Residues 173–181 (DVLRSRVKT) form a G2 motif region. Threonine 181 is a binding site for Mg(2+). A G3 motif region spans residues 196–205 (YRMFDVGGQR). The tract at residues 265 to 272 (ILFLNKID) is G4 motif. The tract at residues 323–328 (TCATDT) is G5 motif.

It belongs to the G-alpha family. G(q) subfamily. G proteins are composed of 3 units; alpha, beta and gamma. The alpha chain contains the guanine nucleotide binding site. Requires Mg(2+) as cofactor.

In terms of biological role, guanine nucleotide-binding proteins (G proteins) are involved as modulators or transducers in various transmembrane signaling systems. Plays a role in pathogenicity, specifically in appressorium formation in rice blast disease. Also involved in mating. The sequence is that of Guanine nucleotide-binding protein subunit alpha (MAGB) from Pyricularia oryzae (strain 70-15 / ATCC MYA-4617 / FGSC 8958) (Rice blast fungus).